We begin with the raw amino-acid sequence, 440 residues long: Ribosomal protein uS12 methylthiotransferase RimO (440 aa).

The MTTase N-terminal domain maps to 5-115; that stretch reads PTVGFVSLGC…VVNAVHEVVP (111 aa). 6 residues coordinate [4Fe-4S] cluster: cysteine 14, cysteine 50, cysteine 79, cysteine 148, cysteine 152, and cysteine 155. Residues 134-372 enclose the Radical SAM core domain; sequence LTPRHYAYLK…MAHQQAISAA (239 aa). Residues 375-440 form the TRAM domain; that stretch reads QLKVGKELDV…DEYDLWAEVI (66 aa).

This sequence belongs to the methylthiotransferase family. RimO subfamily. It depends on [4Fe-4S] cluster as a cofactor.

It localises to the cytoplasm. It carries out the reaction L-aspartate(89)-[ribosomal protein uS12]-hydrogen + (sulfur carrier)-SH + AH2 + 2 S-adenosyl-L-methionine = 3-methylsulfanyl-L-aspartate(89)-[ribosomal protein uS12]-hydrogen + (sulfur carrier)-H + 5'-deoxyadenosine + L-methionine + A + S-adenosyl-L-homocysteine + 2 H(+). Catalyzes the methylthiolation of an aspartic acid residue of ribosomal protein uS12. The polypeptide is Ribosomal protein uS12 methylthiotransferase RimO (Stutzerimonas stutzeri (strain A1501) (Pseudomonas stutzeri)).